Reading from the N-terminus, the 634-residue chain is DNA-directed RNA polymerase subunit gamma (634 aa).

Zn(2+) is bound by residues Cys-74, Cys-76, Cys-89, and Cys-92. Residues Asp-471, Asp-473, and Asp-475 each contribute to the Mg(2+) site.

Belongs to the RNA polymerase beta' chain family. RpoC1 subfamily. In cyanobacteria the RNAP catalytic core is composed of 2 alpha, 1 beta, 1 beta', 1 gamma and 1 omega subunit. When a sigma factor is associated with the core the holoenzyme is formed, which can initiate transcription. It depends on Mg(2+) as a cofactor. Zn(2+) is required as a cofactor.

It carries out the reaction RNA(n) + a ribonucleoside 5'-triphosphate = RNA(n+1) + diphosphate. DNA-dependent RNA polymerase catalyzes the transcription of DNA into RNA using the four ribonucleoside triphosphates as substrates. This is DNA-directed RNA polymerase subunit gamma from Prochlorococcus marinus subsp. pastoris (strain CCMP1986 / NIES-2087 / MED4).